Reading from the N-terminus, the 503-residue chain is ATP synthase subunit alpha (503 aa).

169–176 (GDRQTGKT) lines the ATP pocket.

This sequence belongs to the ATPase alpha/beta chains family. As to quaternary structure, F-type ATPases have 2 components, CF(1) - the catalytic core - and CF(0) - the membrane proton channel. CF(1) has five subunits: alpha(3), beta(3), gamma(1), delta(1), epsilon(1). CF(0) has three main subunits: a(1), b(2) and c(9-12). The alpha and beta chains form an alternating ring which encloses part of the gamma chain. CF(1) is attached to CF(0) by a central stalk formed by the gamma and epsilon chains, while a peripheral stalk is formed by the delta and b chains.

Its subcellular location is the cell membrane. The enzyme catalyses ATP + H2O + 4 H(+)(in) = ADP + phosphate + 5 H(+)(out). Functionally, produces ATP from ADP in the presence of a proton gradient across the membrane. The alpha chain is a regulatory subunit. This Macrococcus caseolyticus (strain JCSC5402) (Macrococcoides caseolyticum) protein is ATP synthase subunit alpha.